A 184-amino-acid polypeptide reads, in one-letter code: Late embryogenesis abundant protein (184 aa).

Positions 49–184 are disordered; it reads TGNIAEYPTE…KLPGHHNHHP (136 aa). Low complexity predominate over residues 60–86; it reads PPAGVAAGTGAAATTAAGVTTSETTTG. 2 stretches are compositionally biased toward basic and acidic residues: residues 87–98 and 122–138; these read QEHHGSLGEHLR and KDKI…KDEQ. A compositionally biased stretch (low complexity) spans 139 to 159; sequence TPTTATTTGPTTTTTTTGAAA. Residues 160–177 are compositionally biased toward basic and acidic residues; it reads DQHHEKKGILEKIKEKLP.

This sequence belongs to the plant dehydrin family.

Functionally, LEA protein are late embryogenesis abundant in higher plant seed embryos. There are two subsets of LEA proteins (5a, and 5b), the first ones are expressed when the cotyledon weight reach 80 mg and the second set are expressed above 100 mg. The function of those proteins is not known. The polypeptide is Late embryogenesis abundant protein (Raphanus sativus (Radish)).